The primary structure comprises 467 residues: ATP synthase subunit beta, sodium ion specific (467 aa).

151 to 158 (GGAGVGKT) serves as a coordination point for ATP.

It belongs to the ATPase alpha/beta chains family. In terms of assembly, F-type ATPases have 2 components, CF(1) - the catalytic core - and CF(0) - the membrane proton channel. CF(1) has five subunits: alpha(3), beta(3), gamma(1), delta(1), epsilon(1). CF(0) has three main subunits: a, b and c.

The protein localises to the cell membrane. The enzyme catalyses 4 Na(+)(in) + ATP + H2O = 4 Na(+)(out) + ADP + phosphate + H(+). Its function is as follows. Produces ATP from ADP in the presence of a sodium ion gradient across the membrane. The beta chain is the catalytic subunit. The sequence is that of ATP synthase subunit beta, sodium ion specific from Propionigenium modestum.